Consider the following 240-residue polypeptide: Probable transcriptional regulator ycf27 (240 aa).

In terms of domain architecture, Response regulatory spans 5-118; sequence KILVIDDEAS…ELEARIRSVL (114 aa). Residue aspartate 54 is modified to 4-aspartylphosphate. The segment at residues 74 to 92 is a DNA-binding region (H-T-H motif); the sequence is DVPIIMLTALSDVSDRITG. The ompR/PhoB-type DNA-binding region spans 133–234; that stretch reads SGIINIGFLK…ARGTGYLFQR (102 aa).

It is found in the plastid. The protein localises to the chloroplast. Functionally, probable promoter-specific protein mediating the interaction between DNA and RNA polymerase. The protein is Probable transcriptional regulator ycf27 (ycf27) of Porphyridium aerugineum (Red microalga).